The chain runs to 93 residues: Exodeoxyribonuclease 7 small subunit (93 aa).

Residues 1 to 22 are disordered; that stretch reads MAKTASPGATPPGNGAEPLPDN.

The protein belongs to the XseB family. As to quaternary structure, heterooligomer composed of large and small subunits.

Its subcellular location is the cytoplasm. The catalysed reaction is Exonucleolytic cleavage in either 5'- to 3'- or 3'- to 5'-direction to yield nucleoside 5'-phosphates.. Functionally, bidirectionally degrades single-stranded DNA into large acid-insoluble oligonucleotides, which are then degraded further into small acid-soluble oligonucleotides. This chain is Exodeoxyribonuclease 7 small subunit, found in Burkholderia multivorans (strain ATCC 17616 / 249).